The chain runs to 168 residues: ATP synthase F(1) complex subunit delta, mitochondrial (168 aa).

The N-terminal 22 residues, 1–22, are a transit peptide targeting the mitochondrion; sequence MLPASLLRHPGLRRLMLQARTY. 2 positions are modified to N6-acetyllysine; alternate: Lys136 and Lys165. An N6-succinyllysine; alternate mark is found at Lys136 and Lys165.

This sequence belongs to the ATPase epsilon chain family. As to quaternary structure, component of the ATP synthase complex composed at least of ATP5F1A/subunit alpha, ATP5F1B/subunit beta, ATP5MC1/subunit c (homooctomer), MT-ATP6/subunit a, MT-ATP8/subunit 8, ATP5ME/subunit e, ATP5MF/subunit f, ATP5MG/subunit g, ATP5MK/subunit k, ATP5MJ/subunit j, ATP5F1C/subunit gamma, ATP5F1D/subunit delta, ATP5F1E/subunit epsilon, ATP5PF/subunit F6, ATP5PB/subunit b, ATP5PD/subunit d, ATP5PO/subunit OSCP. ATP synthase complex consists of a soluble F(1) head domain (subunits alpha(3) and beta(3)) - the catalytic core - and a membrane F(0) domain - the membrane proton channel (subunits c, a, 8, e, f, g, k and j). These two domains are linked by a central stalk (subunits gamma, delta, and epsilon) rotating inside the F1 region and a stationary peripheral stalk (subunits F6, b, d, and OSCP). Component of a complex composed at least by ATPIF1, ATP5F1A, ATP5F1B, ATP5F1C AND ATP5F1E.

It is found in the mitochondrion. It localises to the mitochondrion inner membrane. In terms of biological role, subunit delta, of the mitochondrial membrane ATP synthase complex (F(1)F(0) ATP synthase or Complex V) that produces ATP from ADP in the presence of a proton gradient across the membrane which is generated by electron transport complexes of the respiratory chain. ATP synthase complex consist of a soluble F(1) head domain - the catalytic core - and a membrane F(1) domain - the membrane proton channel. These two domains are linked by a central stalk rotating inside the F(1) region and a stationary peripheral stalk. During catalysis, ATP synthesis in the catalytic domain of F(1) is coupled via a rotary mechanism of the central stalk subunits to proton translocation. In vivo, can only synthesize ATP although its ATP hydrolase activity can be activated artificially in vitro. With the central stalk subunit gamma, is essential for the biogenesis of F(1) catalytic part of the ATP synthase complex namely in the formation of F1 assembly intermediate. This is ATP synthase F(1) complex subunit delta, mitochondrial from Mus musculus (Mouse).